A 355-amino-acid chain; its full sequence is S-adenosylmethionine:tRNA ribosyltransferase-isomerase (355 aa).

It belongs to the QueA family. Monomer.

It is found in the cytoplasm. The catalysed reaction is 7-aminomethyl-7-carbaguanosine(34) in tRNA + S-adenosyl-L-methionine = epoxyqueuosine(34) in tRNA + adenine + L-methionine + 2 H(+). It participates in tRNA modification; tRNA-queuosine biosynthesis. In terms of biological role, transfers and isomerizes the ribose moiety from AdoMet to the 7-aminomethyl group of 7-deazaguanine (preQ1-tRNA) to give epoxyqueuosine (oQ-tRNA). This Aeromonas salmonicida (strain A449) protein is S-adenosylmethionine:tRNA ribosyltransferase-isomerase.